The primary structure comprises 148 residues: Large ribosomal subunit protein bL19 (148 aa).

It belongs to the bacterial ribosomal protein bL19 family.

In terms of biological role, this protein is located at the 30S-50S ribosomal subunit interface and may play a role in the structure and function of the aminoacyl-tRNA binding site. This chain is Large ribosomal subunit protein bL19, found in Paramagnetospirillum magneticum (strain ATCC 700264 / AMB-1) (Magnetospirillum magneticum).